A 186-amino-acid chain; its full sequence is ATP synthase subunit delta (186 aa).

The protein belongs to the ATPase delta chain family. F-type ATPases have 2 components, F(1) - the catalytic core - and F(0) - the membrane proton channel. F(1) has five subunits: alpha(3), beta(3), gamma(1), delta(1), epsilon(1). CF(0) has four main subunits: a(1), b(1), b'(1) and c(10-14). The alpha and beta chains form an alternating ring which encloses part of the gamma chain. F(1) is attached to F(0) by a central stalk formed by the gamma and epsilon chains, while a peripheral stalk is formed by the delta, b and b' chains.

It localises to the cell inner membrane. Functionally, f(1)F(0) ATP synthase produces ATP from ADP in the presence of a proton or sodium gradient. F-type ATPases consist of two structural domains, F(1) containing the extramembraneous catalytic core and F(0) containing the membrane proton channel, linked together by a central stalk and a peripheral stalk. During catalysis, ATP synthesis in the catalytic domain of F(1) is coupled via a rotary mechanism of the central stalk subunits to proton translocation. This protein is part of the stalk that links CF(0) to CF(1). It either transmits conformational changes from CF(0) to CF(1) or is implicated in proton conduction. This Rhodopseudomonas palustris (strain ATCC BAA-98 / CGA009) protein is ATP synthase subunit delta.